The sequence spans 365 residues: MNILKISKQTLTNNIKIIREYVGNAKICFPVKANAYGHGIEEIVENTHDLVDFFAVANSLEAFRVTAITKKPVLVFGVIYYEYLERMVSENIRVSIQDYDDIEKLEQIAKELNKKIYVHINVNTGMNRMGVCYNDVCRTIKRAYNSKWIILEGVYSHLACADNRDHPTNAKQKKRFSEIVEYAKELSQDIICHLSNSYGFLGDKEICYDMVRPGILIYGFLPEFYVERSIREIKPIARLLSKVVKIIELEEGDGVGYSMIYRGFDGEKVAVIPIGYGDGFPRELGDRGFVNIDNVMYPMAGRMSMDGLTVSLGHNEHNVKVGDVVELISDIPRNRNSAFLMAKQVNTIEYDIMSTLNDRIIREVI.

Lys-32 (proton acceptor; specific for D-alanine) is an active-site residue. Position 32 is an N6-(pyridoxal phosphate)lysine (Lys-32). Position 128 (Arg-128) interacts with substrate. Residue Tyr-257 is the Proton acceptor; specific for L-alanine of the active site. Met-305 is a binding site for substrate.

Belongs to the alanine racemase family. Pyridoxal 5'-phosphate is required as a cofactor.

The catalysed reaction is L-alanine = D-alanine. It participates in amino-acid biosynthesis; D-alanine biosynthesis; D-alanine from L-alanine: step 1/1. Its function is as follows. Catalyzes the interconversion of L-alanine and D-alanine. May also act on other amino acids. The protein is Alanine racemase (alr) of Francisella philomiragia subsp. philomiragia (strain ATCC 25017 / CCUG 19701 / FSC 153 / O#319-036).